A 2009-amino-acid polypeptide reads, in one-letter code: Rootletin (2009 aa).

Coiled coils occupy residues 74 to 265 (EMAS…VTSD) and 346 to 438 (ASLH…LRLQ). Disordered stretches follow at residues 462–519 (ALSD…CSDS), 575–594 (RDQTAASAQAQEDAQREAQR), 636–665 (ELKRQHNQLEDAQEDSVQEGARARRELERS), 1180–1225 (EAQR…ELRS), and 1448–1501 (GRVS…EAVR). A compositionally biased stretch (polar residues) spans 463 to 484 (LSDTESGVQLSSSERTADTSDG). 2 coiled-coil regions span residues 550–1058 (LGSV…LLAE) and 1091–1439 (LEME…GLRS). Residues 577 to 586 (QTAASAQAQE) show a composition bias toward low complexity. Residues 656-665 (ARARRELERS) show a composition bias toward basic and acidic residues. 3 positions are modified to phosphoserine: S1453, S1463, and S1469. Phosphotyrosine is present on Y1475. Phosphoserine occurs at positions 1476, 1479, 1483, 1489, and 1568. The span at 1479–1494 (SQPPSPGLIASPAPPD) shows a compositional bias: pro residues. Coiled-coil stretches lie at residues 1498 to 1697 (EAVR…GTLQ) and 1744 to 1998 (HLQK…RSSA). The segment at 1957–2009 (QVQTERTLEARERAHRQRVSGLEEQVSTLKAQLHQELRRSSASVSLPPGTPEK) is disordered.

Belongs to the rootletin family. As to quaternary structure, homomer. Interacts with KLC3, NEK2 and the N-terminus of CEP250. Interacts with CEP44. In terms of processing, phosphorylated by NEK2 which may regulate its association with centrosomes. In terms of tissue distribution, highest expression detected in photoreceptor cells of retina. Expressed at lower levels in brain, trachea and kidney. Detected in all major ciliated epithelia. During embryonic development, enriched along the apical domains of neuroepithelium in brain ventricular zone, in primordia of retinal pigment epithelia and in neural retina.

It localises to the cytoplasm. Its subcellular location is the cytoskeleton. The protein localises to the microtubule organizing center. The protein resides in the centrosome. It is found in the centriole. It localises to the cilium basal body. In terms of biological role, major structural component of the ciliary rootlet, a cytoskeletal-like structure in ciliated cells which originates from the basal body at the proximal end of a cilium and extends proximally toward the cell nucleus. Furthermore, is required for the correct positioning of the cilium basal body relative to the cell nucleus, to allow for ciliogenesis. Contributes to centrosome cohesion before mitosis. This chain is Rootletin, found in Mus musculus (Mouse).